The following is a 198-amino-acid chain: Pyridoxal 5'-phosphate synthase subunit PdxT (198 aa).

49–51 (GES) contributes to the L-glutamine binding site. Cys81 functions as the Nucleophile in the catalytic mechanism. L-glutamine-binding positions include Arg113 and 141-142 (IR). Residues His177 and Glu179 each act as charge relay system in the active site.

It belongs to the glutaminase PdxT/SNO family. In terms of assembly, in the presence of PdxS, forms a dodecamer of heterodimers. Only shows activity in the heterodimer.

It catalyses the reaction aldehydo-D-ribose 5-phosphate + D-glyceraldehyde 3-phosphate + L-glutamine = pyridoxal 5'-phosphate + L-glutamate + phosphate + 3 H2O + H(+). The enzyme catalyses L-glutamine + H2O = L-glutamate + NH4(+). It functions in the pathway cofactor biosynthesis; pyridoxal 5'-phosphate biosynthesis. Its function is as follows. Catalyzes the hydrolysis of glutamine to glutamate and ammonia as part of the biosynthesis of pyridoxal 5'-phosphate. The resulting ammonia molecule is channeled to the active site of PdxS. The protein is Pyridoxal 5'-phosphate synthase subunit PdxT of Mycobacterium avium (strain 104).